Consider the following 140-residue polypeptide: Transmembrane protein 107 (140 aa).

The next 2 helical transmembrane spans lie at 7 to 27 and 53 to 73; these read LVPSRFLTLLAHLVIVITLFW and LVAALCLTLGLFAVELAGFLS. Asn79 carries N-linked (GlcNAc...) asparagine glycosylation. 2 helical membrane-spanning segments follow: residues 83-103 and 113-133; these read SLLSIAAHCSASVALSFFIFE and IFAFCSAFPAVTETALFIAVF.

In terms of assembly, part of the tectonic-like complex (also named B9 complex). Interacts with TMEM237, TMEM231, MKS1 and TMEM216.

The protein localises to the membrane. It is found in the cell projection. It localises to the cilium. Functionally, plays a role in cilia formation and embryonic patterning. Requires for normal Sonic hedgehog (Shh) signaling in the neural tube and acts in combination with GLI2 and GLI3 to pattern ventral and intermediate neuronal cell types. During ciliogenesis regulates the ciliary transition zone localization of some MKS complex proteins. The sequence is that of Transmembrane protein 107 from Rattus norvegicus (Rat).